The following is a 444-amino-acid chain: Acyl-CoA (8-3)-desaturase (444 aa).

M1 is subject to N-acetylmethionine. Residues M1–Q121 lie on the Cytoplasmic side of the membrane. In terms of domain architecture, Cytochrome b5 heme-binding spans P17–S94. Residues M122–L142 form a helical membrane-spanning segment. Residues D143–A146 are Lumenal-facing. A helical transmembrane segment spans residues W147–L167. Over T168–F267 the chain is Cytoplasmic. Positions H179–H183 match the Histidine box-1 motif. Residues H216–H220 carry the Histidine box-2 motif. The chain crosses the membrane as a helical span at residues L268–I288. Residues Q289 to R305 are Lumenal-facing. A helical transmembrane segment spans residues L306–V326. At R327–Q444 the chain is on the cytoplasmic side. A Histidine box-3 motif is present at residues Q382–H386.

Belongs to the fatty acid desaturase type 1 family. Widely expressed. Expressed in brain, liver and thymus (at protein level). Isoform 1 seems to be more abundant than isoform 2. Expression of isoform 2 is very low in spleen and not detectable in skeletal muscle.

It localises to the endoplasmic reticulum membrane. Its subcellular location is the mitochondrion. It carries out the reaction (8Z,11Z,14Z)-eicosatrienoyl-CoA + 2 Fe(II)-[cytochrome b5] + O2 + 2 H(+) = (5Z,8Z,11Z,14Z)-eicosatetraenoyl-CoA + 2 Fe(III)-[cytochrome b5] + 2 H2O. The enzyme catalyses (8Z,11Z,14Z,17Z)-eicosatetraenoyl-CoA + 2 Fe(II)-[cytochrome b5] + O2 + 2 H(+) = (5Z,8Z,11Z,14Z,17Z)-eicosapentaenoyl-CoA + 2 Fe(III)-[cytochrome b5] + 2 H2O. It catalyses the reaction (11E)-octadecenoyl-CoA + 2 Fe(II)-[cytochrome b5] + O2 + 2 H(+) = (5Z,11E)-octadecadienoyl-CoA + 2 Fe(III)-[cytochrome b5] + 2 H2O. It functions in the pathway lipid metabolism; polyunsaturated fatty acid biosynthesis. Functionally, acts as a front-end fatty acyl-coenzyme A (CoA) desaturase that introduces a cis double bond at carbon 5 located between a preexisting double bond and the carboxyl end of the fatty acyl chain. Involved in biosynthesis of highly unsaturated fatty acids (HUFA) from the essential polyunsaturated fatty acids (PUFA) linoleic acid (LA) (18:2n-6) and alpha-linolenic acid (ALA) (18:3n-3) precursors. Specifically, desaturates dihomo-gamma-linoleoate (DGLA) (20:3n-6) and eicosatetraenoate (ETA) (20:4n-3) to generate arachidonate (AA) (20:4n-6) and eicosapentaenoate (EPA) (20:5n-3), respectively. As a rate limiting enzyme for DGLA (20:3n-6) and AA (20:4n-6)-derived eicosanoid biosynthesis, controls the metabolism of inflammatory lipids like prostaglandin E2, critical for efficient acute inflammatory response and maintenance of epithelium homeostasis. Contributes to membrane phospholipid biosynthesis by providing AA (20:4n-6) as a major acyl chain esterified into phospholipids. In particular, regulates phosphatidylinositol-4,5-bisphosphate levels, modulating inflammatory cytokine production in T-cells. Also desaturates (11E)-octadecenoate (trans-vaccenoate)(18:1n-9), a metabolite in the biohydrogenation pathway of LA (18:2n-6). Does not exhibit any catalytic activity toward 20:3n-6, but it may enhance FADS2 activity. This is Acyl-CoA (8-3)-desaturase from Papio anubis (Olive baboon).